We begin with the raw amino-acid sequence, 206 residues long: Histidine biosynthesis bifunctional protein HisIE (206 aa).

The tract at residues 1-117 is phosphoribosyl-AMP cyclohydrolase; the sequence is MGSETTAAGD…SCFPTAPSQF (117 aa). The segment at 118-206 is phosphoribosyl-ATP pyrophosphohydrolase; the sequence is LGSLDALIAE…AVALLESRHK (89 aa).

The protein in the N-terminal section; belongs to the PRA-CH family. In the C-terminal section; belongs to the PRA-PH family.

It localises to the cytoplasm. The catalysed reaction is 1-(5-phospho-beta-D-ribosyl)-ATP + H2O = 1-(5-phospho-beta-D-ribosyl)-5'-AMP + diphosphate + H(+). It carries out the reaction 1-(5-phospho-beta-D-ribosyl)-5'-AMP + H2O = 1-(5-phospho-beta-D-ribosyl)-5-[(5-phospho-beta-D-ribosylamino)methylideneamino]imidazole-4-carboxamide. The protein operates within amino-acid biosynthesis; L-histidine biosynthesis; L-histidine from 5-phospho-alpha-D-ribose 1-diphosphate: step 2/9. Its pathway is amino-acid biosynthesis; L-histidine biosynthesis; L-histidine from 5-phospho-alpha-D-ribose 1-diphosphate: step 3/9. This is Histidine biosynthesis bifunctional protein HisIE from Xanthomonas campestris pv. campestris (strain ATCC 33913 / DSM 3586 / NCPPB 528 / LMG 568 / P 25).